Here is a 127-residue protein sequence, read N- to C-terminus: Aspartate 1-decarboxylase (127 aa).

Ser25 (schiff-base intermediate with substrate; via pyruvic acid) is an active-site residue. Ser25 bears the Pyruvic acid (Ser) mark. Thr57 lines the substrate pocket. Catalysis depends on Tyr58, which acts as the Proton donor. Residue 73–75 (GAA) coordinates substrate.

It belongs to the PanD family. As to quaternary structure, heterooctamer of four alpha and four beta subunits. It depends on pyruvate as a cofactor. Is synthesized initially as an inactive proenzyme, which is activated by self-cleavage at a specific serine bond to produce a beta-subunit with a hydroxyl group at its C-terminus and an alpha-subunit with a pyruvoyl group at its N-terminus.

It is found in the cytoplasm. It carries out the reaction L-aspartate + H(+) = beta-alanine + CO2. The protein operates within cofactor biosynthesis; (R)-pantothenate biosynthesis; beta-alanine from L-aspartate: step 1/1. Catalyzes the pyruvoyl-dependent decarboxylation of aspartate to produce beta-alanine. The chain is Aspartate 1-decarboxylase from Bacillus cytotoxicus (strain DSM 22905 / CIP 110041 / 391-98 / NVH 391-98).